A 247-amino-acid polypeptide reads, in one-letter code: ATP synthase subunit a, chloroplastic (247 aa).

The next 5 helical transmembrane spans lie at 38–58, 95–115, 134–154, 199–219, and 220–240; these read QVLI…TLAV, VPFI…GALL, INTT…AGLS, LVVV…VMFL, and GLFT…AYIG.

Belongs to the ATPase A chain family. F-type ATPases have 2 components, CF(1) - the catalytic core - and CF(0) - the membrane proton channel. CF(1) has five subunits: alpha(3), beta(3), gamma(1), delta(1), epsilon(1). CF(0) has four main subunits: a, b, b' and c.

It is found in the plastid. The protein resides in the chloroplast thylakoid membrane. Its function is as follows. Key component of the proton channel; it plays a direct role in the translocation of protons across the membrane. This Lemna minor (Common duckweed) protein is ATP synthase subunit a, chloroplastic.